The following is a 614-amino-acid chain: Phragmoplastin DRP1C (614 aa).

Residues 32-301 (WEALPTVAVV…LETVIRQKIP (270 aa)) enclose the Dynamin-type G domain. The interval 42–49 (GGQSSGKS) is G1 motif. 45–50 (SSGKSS) serves as a coordination point for GTP. The G2 motif stretch occupies residues 68–70 (VTR). The segment at 143–146 (DLPG) is G3 motif. Residues 212–215 (TKLD) form a G4 motif region. Residues 213-218 (KLDIMD) and 243-246 (NRSQ) contribute to the GTP site. The G5 motif stretch occupies residues 242 to 245 (VNRS). A disordered region spans residues 499-519 (EPEKEKPNPRNAPAPNADPYS). Residues 507 to 517 (PRNAPAPNADP) show a composition bias toward low complexity. The region spanning 523-614 (FRKIGSNVSA…RDDIDAVAWK (92 aa)) is the GED domain.

Belongs to the TRAFAC class dynamin-like GTPase superfamily. Dynamin/Fzo/YdjA family. As to quaternary structure, forms homodimer and may homooligomerize and heterooligomerize to form the phragmoplastin complex. Binds to PHIP1. In terms of tissue distribution, ubiquitous.

It localises to the cytoplasm. It is found in the cytoskeleton. The protein localises to the cell cortex. The protein resides in the cytoplasmic vesicle. Its subcellular location is the clathrin-coated vesicle. It localises to the phragmoplast. The enzyme catalyses GTP + H2O = GDP + phosphate + H(+). In terms of biological role, microtubule-associated force-producing protein that is targeted to the growing edges of the cell plate during cytokinesis. Also plays a major role in plasma membrane maintenance during pollen maturation. Has a GTPase activity. The protein is Phragmoplastin DRP1C of Arabidopsis thaliana (Mouse-ear cress).